Reading from the N-terminus, the 227-residue chain is uncharacterized protein (227 aa).

Belongs to the flavoredoxin family. The cofactor is FMN.

This is an uncharacterized protein from Deinococcus radiodurans (strain ATCC 13939 / DSM 20539 / JCM 16871 / CCUG 27074 / LMG 4051 / NBRC 15346 / NCIMB 9279 / VKM B-1422 / R1).